A 348-amino-acid polypeptide reads, in one-letter code: Phosphate acyltransferase (348 aa).

It belongs to the PlsX family. As to quaternary structure, homodimer. Probably interacts with PlsY.

The protein localises to the cytoplasm. The catalysed reaction is a fatty acyl-[ACP] + phosphate = an acyl phosphate + holo-[ACP]. It functions in the pathway lipid metabolism; phospholipid metabolism. Functionally, catalyzes the reversible formation of acyl-phosphate (acyl-PO(4)) from acyl-[acyl-carrier-protein] (acyl-ACP). This enzyme utilizes acyl-ACP as fatty acyl donor, but not acyl-CoA. The chain is Phosphate acyltransferase from Pectobacterium atrosepticum (strain SCRI 1043 / ATCC BAA-672) (Erwinia carotovora subsp. atroseptica).